Consider the following 617-residue polypeptide: Transmembrane protein 232 (617 aa).

The helical transmembrane segment at leucine 129 to leucine 149 threads the bilayer. A coiled-coil region spans residues leucine 567–glutamine 604. Residues glutamate 598–glutamate 617 form a disordered region.

It localises to the membrane. Its function is as follows. Plays a critical role for male fertility and sperm motility by regulating sperm cytoplasm removal and maintaining axoneme integrity. The chain is Transmembrane protein 232 (Tmem232) from Rattus norvegicus (Rat).